The chain runs to 321 residues: Lipoyl synthase (321 aa).

Residues cysteine 68, cysteine 73, cysteine 79, cysteine 94, cysteine 98, cysteine 101, and serine 308 each coordinate [4Fe-4S] cluster. The Radical SAM core domain occupies phenylalanine 80 to threonine 297.

This sequence belongs to the radical SAM superfamily. Lipoyl synthase family. The cofactor is [4Fe-4S] cluster.

The protein resides in the cytoplasm. It catalyses the reaction [[Fe-S] cluster scaffold protein carrying a second [4Fe-4S](2+) cluster] + N(6)-octanoyl-L-lysyl-[protein] + 2 oxidized [2Fe-2S]-[ferredoxin] + 2 S-adenosyl-L-methionine + 4 H(+) = [[Fe-S] cluster scaffold protein] + N(6)-[(R)-dihydrolipoyl]-L-lysyl-[protein] + 4 Fe(3+) + 2 hydrogen sulfide + 2 5'-deoxyadenosine + 2 L-methionine + 2 reduced [2Fe-2S]-[ferredoxin]. It participates in protein modification; protein lipoylation via endogenous pathway; protein N(6)-(lipoyl)lysine from octanoyl-[acyl-carrier-protein]: step 2/2. Its function is as follows. Catalyzes the radical-mediated insertion of two sulfur atoms into the C-6 and C-8 positions of the octanoyl moiety bound to the lipoyl domains of lipoate-dependent enzymes, thereby converting the octanoylated domains into lipoylated derivatives. The protein is Lipoyl synthase of Escherichia coli O9:H4 (strain HS).